Here is a 156-residue protein sequence, read N- to C-terminus: Type IV major fimbrial protein FimA (156 aa).

A propeptide spans 1–7 (MKSLQKG) (leader sequence). An N-methylphenylalanine modification is found at phenylalanine 8. Residues 8–28 (FTLIELMIVVAIIGILAAIAI) traverse the membrane as a helical segment. Disulfide bonds link cysteine 57-cysteine 67 and cysteine 141-cysteine 154.

The protein belongs to the N-Me-Phe pilin family. In terms of assembly, the pili are polar flexible filaments of about 5.4 nanometers diameter and 2.5 micrometers average length; they consist of only a single polypeptide chain arranged in a helical configuration of five subunits per turn in the assembled pilus.

Its subcellular location is the fimbrium. The protein resides in the membrane. Functionally, major component of the type IV fimbriae that plays an essential role in twitching motility, natural transformation, and protease secretion. The protein is Type IV major fimbrial protein FimA (fimA) of Dichelobacter nodosus (Bacteroides nodosus).